The following is a 113-amino-acid chain: UPF0482 protein YnfB (113 aa).

The first 28 residues, 1 to 28 (MKITLSKRIGLLAFLLPCALALSTTVHA), serve as a signal peptide directing secretion.

It belongs to the UPF0482 family.

The chain is UPF0482 protein YnfB from Shigella dysenteriae serotype 1 (strain Sd197).